We begin with the raw amino-acid sequence, 183 residues long: Dual-action ribosomal maturation protein DarP (183 aa).

The protein belongs to the DarP family.

The protein localises to the cytoplasm. Its function is as follows. Member of a network of 50S ribosomal subunit biogenesis factors which assembles along the 30S-50S interface, preventing incorrect 23S rRNA structures from forming. Promotes peptidyl transferase center (PTC) maturation. In Escherichia coli O6:H1 (strain CFT073 / ATCC 700928 / UPEC), this protein is Dual-action ribosomal maturation protein DarP.